We begin with the raw amino-acid sequence, 106 residues long: Iron-sulfur cluster assembly protein CyaY (106 aa).

This sequence belongs to the frataxin family.

Functionally, involved in iron-sulfur (Fe-S) cluster assembly. May act as a regulator of Fe-S biogenesis. In Escherichia fergusonii (strain ATCC 35469 / DSM 13698 / CCUG 18766 / IAM 14443 / JCM 21226 / LMG 7866 / NBRC 102419 / NCTC 12128 / CDC 0568-73), this protein is Iron-sulfur cluster assembly protein CyaY.